Reading from the N-terminus, the 368-residue chain is Phosphate acyltransferase (368 aa).

Residues 335–368 (VSLGDGEHDAGGAGHTGPAAGQHAEPPAAQSSKA) are disordered.

It belongs to the PlsX family. In terms of assembly, homodimer. Probably interacts with PlsY.

It is found in the cytoplasm. The enzyme catalyses a fatty acyl-[ACP] + phosphate = an acyl phosphate + holo-[ACP]. It participates in lipid metabolism; phospholipid metabolism. Functionally, catalyzes the reversible formation of acyl-phosphate (acyl-PO(4)) from acyl-[acyl-carrier-protein] (acyl-ACP). This enzyme utilizes acyl-ACP as fatty acyl donor, but not acyl-CoA. The protein is Phosphate acyltransferase of Burkholderia vietnamiensis (strain G4 / LMG 22486) (Burkholderia cepacia (strain R1808)).